Reading from the N-terminus, the 239-residue chain is Putative 3-methyladenine DNA glycosylase (239 aa).

This sequence belongs to the DNA glycosylase MPG family.

This chain is Putative 3-methyladenine DNA glycosylase, found in Pseudomonas aeruginosa (strain UCBPP-PA14).